We begin with the raw amino-acid sequence, 271 residues long: Protein FAM110D (271 aa).

Disordered regions lie at residues 1–83 (MLLA…RPDS), 116–145 (PRDAAPSSPASTERPAASGGWAAPQDAPEA), and 186–245 (PQSW…PVSV). Over residues 68–78 (RPVRRGSGRRL) the composition is skewed to basic residues. The span at 116 to 126 (PRDAAPSSPAS) shows a compositional bias: low complexity. Residues 220–231 (SPGGAGGGGGSE) are compositionally biased toward gly residues.

This sequence belongs to the FAM110 family.

In Homo sapiens (Human), this protein is Protein FAM110D (FAM110D).